The primary structure comprises 289 residues: MSIEFKNVDYVYAPGTPFQTQGLIDISFKIEKGSFVAIAGHTGSGKSTLMQHFDGLLLPSKGEITVAGEQINANTSSKALKAIRKKVGLVFQFPENQLFEETVLKDVMFGPLNFGFSEQKAKEQAVEWIKKVGLSEDMMDKSPFELSGGQMRRVAIAGVMAYEPEILCLDEPAAGLDPEGQKQMFEIFKEYQRAGHTVILISHNMDDISEYADDMLVLDHGHLIKHASPQEIFSDQEWVKKHYLDEPATSRLTRELQKGGFQFSEMPLTIESLVSKVANELKKKGDMDE.

An ABC transporter domain is found at 3–245 (IEFKNVDYVY…QEWVKKHYLD (243 aa)). 40–47 (GHTGSGKS) is an ATP binding site.

The protein belongs to the ABC transporter superfamily. Energy-coupling factor EcfA family. In terms of assembly, forms a stable energy-coupling factor (ECF) transporter complex composed of 2 membrane-embedded substrate-binding proteins (S component), 2 ATP-binding proteins (A component) and 2 transmembrane proteins (T component).

It is found in the cell membrane. In terms of biological role, ATP-binding (A) component of a common energy-coupling factor (ECF) ABC-transporter complex. Unlike classic ABC transporters this ECF transporter provides the energy necessary to transport a number of different substrates. In Lactobacillus johnsonii (strain CNCM I-12250 / La1 / NCC 533), this protein is Energy-coupling factor transporter ATP-binding protein EcfA2.